Consider the following 839-residue polypeptide: Transcription regulator protein BACH2 (839 aa).

Residues 37–103 (CDVTLIVERK…AYTAKLLLSR (67 aa)) form the BTB domain. Disordered stretches follow at residues 150–170 (QRPQ…EETM) and 247–331 (HGTS…LDRS). Positions 161-170 (GEEEEEEETM) are enriched in acidic residues. Residues 247–263 (HGTSGFASTFSEDSPGN) are compositionally biased toward polar residues. Positions 297-312 (TDIKDRPGDVEMDRKQ) are enriched in basic and acidic residues. Ser314 bears the Phosphoserine mark. Low complexity predominate over residues 321–331 (TPTGAACLDRS). Residues Lys381 and Lys420 each participate in a glycyl lysine isopeptide (Lys-Gly) (interchain with G-Cter in SUMO2) cross-link. Residue Ser520 is modified to Phosphoserine. The segment at 582–609 (QSYGTNSSDESGSFSEADSESCPVQDRG) is disordered. Positions 583-597 (SYGTNSSDESGSFSE) are enriched in polar residues. A bZIP domain is found at 645–708 (FIHDIRRRSK…GELLDNFSCL (64 aa)). Residues 650–666 (RRRSKNRIAAQRCRKRK) form a basic motif region. The interval 670–677 (IQNLECEI) is leucine-zipper. A disordered region spans residues 778–813 (PWVPSNTSENCTSGRRLEGSDPGTFSERGPPLEARS). Over residues 781 to 790 (PSNTSENCTS) the composition is skewed to polar residues. The Nuclear export signal signature appears at 819-839 (DFCQEMTEKCTTDEQPRKDYA).

It belongs to the bZIP family. CNC subfamily. In terms of assembly, homodimer; disulfide-linked. Heterodimer of BACH2 and Maf-related transcription factors. In terms of processing, the reversible disulfide bond may provide a mechanism to regulate the activity in oxidative stress responses. Phosphorylation at Ser-520 downstream of the PI-3K pathway promotes nuclear export. Detected in brain and spleen.

It is found in the cytoplasm. It localises to the nucleus. Functionally, transcriptional regulator that acts as a repressor or activator. Binds to Maf recognition elements (MARE). Plays an important role in coordinating transcription activation and repression by MAFK. Induces apoptosis in response to oxidative stress through repression of the antiapoptotic factor HMOX1. Positively regulates the nuclear import of actin. Is a key regulator of adaptive immunity, crucial for the maintenance of regulatory T-cell function and B-cell maturation. This Mus musculus (Mouse) protein is Transcription regulator protein BACH2 (Bach2).